We begin with the raw amino-acid sequence, 1019 residues long: Photoactivated adenylate cyclase subunit alpha-like protein 1224-5/1F (1019 aa).

One can recognise a BLUF 1 domain in the interval L55–K148. Residues V204 to T332 enclose the Guanylate cyclase 1 domain. Residues L467–T559 enclose the BLUF 2 domain. A Guanylate cyclase 2 domain is found at V615–E744. A disordered region spans residues N825 to A863.

The protein belongs to the adenylyl cyclase class-4/guanylyl cyclase family. Heterotetramer of two alpha and two beta subunits.

It is found in the cell projection. The protein resides in the cilium. It localises to the flagellum. The chain is Photoactivated adenylate cyclase subunit alpha-like protein 1224-5/1F from Euglena gracilis.